A 441-amino-acid polypeptide reads, in one-letter code: MLIKINQYFRKSISVLGNLKLAIILLLMLALFSAFGTVIEQNQNVAFYENSYPNSAPLFGFLSANAILFLGLNNIYQTWWFTTLILLLAVSLFSCTLARQIPSLKMARLWQFYTKDQSLKKIGLSFNLQKTSLSKLAFTLKTDDYNVIQKGRFLYAYKGLPGKIGPIIVHASLIIILFGALLGNLSGFVSQELVPLGGVFHIQNIINSGTLSYVPQNFEGYVKDFKIAYNDEGSIDQFYSDLSILNSTGEEVRSKTIYVNEPLRYEGIVFYQTDWSITNLAINVDQQTNIQLPLKSINVKGEGKFWIASLPIANVEKATNDNILLVLEDLTGKILLYSSNQQLLAIVNVGENISLNGHSVKVTDIISSTGLQIKSDPGIPFVYIGFFLLMLSITLSYFSYSQVWAIKDNKTLYVSGRTNRAIYSFEQQITKMMNKLNSTYA.

3 helical membrane-spanning segments follow: residues 19-39 (LKLA…GTVI), 78-98 (TWWF…CTLA), and 164-184 (IGPI…LLGN).

This sequence belongs to the Ccs1/CcsB family. As to quaternary structure, may interact with CcsA.

The protein resides in the plastid. The protein localises to the chloroplast thylakoid membrane. Functionally, required during biogenesis of c-type cytochromes (cytochrome c6 and cytochrome f) at the step of heme attachment. The chain is Cytochrome c biogenesis protein Ccs1 from Rhodomonas salina (Cryptomonas salina).